The sequence spans 318 residues: Transaldolase (318 aa).

Lys-132 serves as the catalytic Schiff-base intermediate with substrate.

This sequence belongs to the transaldolase family. Type 1 subfamily. In terms of assembly, homodimer.

The protein resides in the cytoplasm. It catalyses the reaction D-sedoheptulose 7-phosphate + D-glyceraldehyde 3-phosphate = D-erythrose 4-phosphate + beta-D-fructose 6-phosphate. Its pathway is carbohydrate degradation; pentose phosphate pathway; D-glyceraldehyde 3-phosphate and beta-D-fructose 6-phosphate from D-ribose 5-phosphate and D-xylulose 5-phosphate (non-oxidative stage): step 2/3. Functionally, transaldolase is important for the balance of metabolites in the pentose-phosphate pathway. This chain is Transaldolase, found in Shewanella piezotolerans (strain WP3 / JCM 13877).